A 255-amino-acid polypeptide reads, in one-letter code: Aspartate/glutamate leucyltransferase (255 aa).

The protein belongs to the R-transferase family. Bpt subfamily.

It is found in the cytoplasm. It carries out the reaction N-terminal L-glutamyl-[protein] + L-leucyl-tRNA(Leu) = N-terminal L-leucyl-L-glutamyl-[protein] + tRNA(Leu) + H(+). It catalyses the reaction N-terminal L-aspartyl-[protein] + L-leucyl-tRNA(Leu) = N-terminal L-leucyl-L-aspartyl-[protein] + tRNA(Leu) + H(+). Functions in the N-end rule pathway of protein degradation where it conjugates Leu from its aminoacyl-tRNA to the N-termini of proteins containing an N-terminal aspartate or glutamate. This chain is Aspartate/glutamate leucyltransferase, found in Leptospira borgpetersenii serovar Hardjo-bovis (strain JB197).